The following is a 505-amino-acid chain: Peroxisome proliferator-activated receptor gamma (505 aa).

T84 is a glycosylation site (O-linked (GlcNAc) threonine). S112 is modified (phosphoserine; by MAPK). The segment at residues 136-210 (AIECRVCGDK…VGMSHNAIRF (75 aa)) is a DNA-binding region (nuclear receptor). 2 NR C4-type zinc fingers span residues 139–159 (CRVCGDKASGFHYGVHACEGC) and 176–198 (CDLNCRIHKKSRNKCQYCRFQKC). An interaction with FAM120B region spans residues 205 to 280 (HNAIRFGRMP…DKSPFVIYDM (76 aa)). The NR LBD domain maps to 238–503 (DLRALAKHLY…HPLLQEIYKD (266 aa)). K252 participates in a covalent cross-link: Glycyl lysine isopeptide (Lys-Gly) (interchain with G-Cter in ubiquitin). The 9aaTAD motif lies at 495-503 (PLLQEIYKD).

It belongs to the nuclear hormone receptor family. NR1 subfamily. In terms of assembly, interacts with FOXO1 (acetylated form). Heterodimer with other nuclear receptors, such as RXRA. The heterodimer with the retinoic acid receptor RXRA is called adipocyte-specific transcription factor ARF6. Interacts with NCOA6 coactivator, leading to a strong increase in transcription of target genes. Interacts with coactivator PPARBP, leading to a mild increase in transcription of target genes. Interacts with NOCA7 in a ligand-inducible manner. Interacts with NCOA1 and NCOA2 LXXLL motifs. Interacts with ASXL1, ASXL2, DNTTIP2, FAM120B, MAP2K1/MEK1, NR0B2, PDPK1, PRDM16, PRMT2 and TGFB1I1. Interacts (when activated by agonist) with PPP5C. Interacts with HELZ2 and THRAP3; the interaction stimulates the transcriptional activity of PPARG. Interacts with PER2, the interaction is ligand dependent and blocks PPARG recruitment to target promoters. Interacts with NOCT. Interacts with ACTN4. Interacts (when in the liganded conformation) with GPS2. Interacts with CRY1 and CRY2 in a ligand-dependent manner. In the absence of hormonal ligand, interacts with TACC1. In macrophages, interacts with PAQR3 and STUB1; the interactions promote PPARG poylubiquitination and STUB1-mediated degradation. Post-translationally, O-GlcNAcylation at Thr-84 reduces transcriptional activity in adipocytes. In terms of processing, phosphorylated at basal conditions and dephosphorylated when treated with the ligand. May be dephosphorylated by PPP5C. The phosphorylated form may be inactive and dephosphorylation induces adipogenic activity. Ubiquitinated by E3 ubiquitin-protein ligase complex containing FBXO9; leading to proteasomal degradation. Ubiquitinated at Lys-252 by TRIM55 leading to proteasomal degradation. Ubiquitinated by E3 ubiquitin-protein ligase STUB1/CHIP; leading to proteasomal degradation. Highest expression in adipose tissue. Lower in liver, heart, kidney, stomach, duodenum and colon.

Its subcellular location is the nucleus. The protein localises to the cytoplasm. Its activity is regulated as follows. PDPK1 activates its transcriptional activity independently of its kinase activity. In terms of biological role, nuclear receptor that binds peroxisome proliferators such as hypolipidemic drugs and fatty acids. Once activated by a ligand, the nuclear receptor binds to DNA specific PPAR response elements (PPRE) and modulates the transcription of its target genes, such as acyl-CoA oxidase. It therefore controls the peroxisomal beta-oxidation pathway of fatty acids. Key regulator of adipocyte differentiation and glucose homeostasis. ARF6 acts as a key regulator of the tissue-specific adipocyte P2 (aP2) enhancer. Acts as a critical regulator of gut homeostasis by suppressing NF-kappa-B-mediated pro-inflammatory responses. Plays a role in the regulation of cardiovascular circadian rhythms by regulating the transcription of BMAL1 in the blood vessels. This Macaca mulatta (Rhesus macaque) protein is Peroxisome proliferator-activated receptor gamma (PPARG).